Reading from the N-terminus, the 257-residue chain is MVVVSVPAEVTVILLDIEGTTTPIAFVKDVLFPYIKENVKEYLQTHWEEEECQQDVSLLRKQAEEDAHLDGAVPIPVASGSDLQQMIQAVVDNVYWQMSHDRKTTALKQLQGHMWKAAFTAGRMKAEFFADVVPAVRRWREAGMKVYIYSSGSVEAQKLLFGHSTEGDILELIDGHFDTKIGHKVDSESYRKIADSIGCSTNNILFLTDVTVEASAAEEADVHVAVVVRPGNAGLTDDEKTYYNLITSFSELYLPST.

Residues Asp-16 and Glu-18 each contribute to the Mg(2+) site. Residues 150-151 (SS) and Lys-184 each bind substrate. Residue Asp-209 participates in Mg(2+) binding.

Belongs to the HAD-like hydrolase superfamily. MasA/MtnC family. In terms of assembly, monomer. It depends on Mg(2+) as a cofactor.

The protein resides in the cytoplasm. It localises to the nucleus. It carries out the reaction 5-methylsulfanyl-2,3-dioxopentyl phosphate + H2O = 1,2-dihydroxy-5-(methylsulfanyl)pent-1-en-3-one + phosphate. The protein operates within amino-acid biosynthesis; L-methionine biosynthesis via salvage pathway; L-methionine from S-methyl-5-thio-alpha-D-ribose 1-phosphate: step 3/6. It participates in amino-acid biosynthesis; L-methionine biosynthesis via salvage pathway; L-methionine from S-methyl-5-thio-alpha-D-ribose 1-phosphate: step 4/6. Functionally, bifunctional enzyme that catalyzes the enolization of 2,3-diketo-5-methylthiopentyl-1-phosphate (DK-MTP-1-P) into the intermediate 2-hydroxy-3-keto-5-methylthiopentenyl-1-phosphate (HK-MTPenyl-1-P), which is then dephosphorylated to form the acireductone 1,2-dihydroxy-3-keto-5-methylthiopentene (DHK-MTPene). The protein is Enolase-phosphatase E1 (Enoph1) of Mus musculus (Mouse).